The following is a 115-amino-acid chain: Putative type I restriction enzyme MpnIIP endonuclease subunit middle part (115 aa).

The middle section of a putative type I restriction enzyme that if reconstituted might recognize 5'-GAN(7)TAY-3' and cleave a random distance away. Subunit R is required for both nuclease and ATPase activities, but not for modification. The protein is Putative type I restriction enzyme MpnIIP endonuclease subunit middle part of Mycoplasma pneumoniae (strain ATCC 29342 / M129 / Subtype 1) (Mycoplasmoides pneumoniae).